The following is a 440-amino-acid chain: Phosphatidylcholine-sterol acyltransferase (440 aa).

The first 24 residues, 1-24 (MGPPGSPWQWVLLLLGLLLPPAAP), serve as a signal peptide directing secretion. Asn-44 is a glycosylation site (N-linked (GlcNAc...) asparagine). Cys-74 and Cys-98 are disulfide-bonded. Asn-108 carries an N-linked (GlcNAc...) asparagine glycan. Ser-205 (nucleophile) is an active-site residue. Residue Asn-296 is glycosylated (N-linked (GlcNAc...) asparagine). Cysteines 337 and 380 form a disulfide. Active-site charge relay system residues include Asp-369 and His-401. A glycan (N-linked (GlcNAc...) asparagine) is linked at Asn-408.

Belongs to the AB hydrolase superfamily. Lipase family. Detected in blood plasma (at protein level). Highly expressed in liver.

The protein resides in the secreted. It carries out the reaction a sterol + a 1,2-diacyl-sn-glycero-3-phosphocholine = a sterol ester + a 1-acyl-sn-glycero-3-phosphocholine. It catalyses the reaction a 1-O-alkyl-2-acetyl-sn-glycero-3-phosphocholine + H2O = a 1-O-alkyl-sn-glycero-3-phosphocholine + acetate + H(+). The enzyme catalyses a 1-hexadecanoyl-2-acyl-sn-glycero-3-phosphocholine + (24S)-hydroxycholesterol = (24S)-24-hydroxycholesterol ester + 1-hexadecanoyl-sn-glycero-3-phosphocholine. The catalysed reaction is (24S)-hydroxycholesterol + 1-hexadecanoyl-2-(9Z,12Z-octadecadienoyl)-sn-glycero-3-phosphocholine = (24S)-hydroxycholesterol 3-linoleoate + 1-hexadecanoyl-sn-glycero-3-phosphocholine. It carries out the reaction 1-hexadecanoyl-2-(5Z,8Z,11Z,14Z-eicosatetraenoyl)-sn-glycero-3-phosphocholine + cholesterol = cholesteryl (5Z,8Z,11Z,14Z)-eicosatetraenoate + 1-hexadecanoyl-sn-glycero-3-phosphocholine. It catalyses the reaction 1-hexadecanoyl-2-(9Z-octadecenoyl)-sn-glycero-3-phosphocholine + cholesterol = cholesteryl (9Z-octadecenoate) + 1-hexadecanoyl-sn-glycero-3-phosphocholine. The enzyme catalyses 1-hexadecanoyl-2-(8Z,11Z,14Z-eicosatrienoyl)-sn-glycero-3-phosphocholine + cholesterol = cholesteryl (8Z,11Z,14Z)-eicosatrienoate + 1-hexadecanoyl-sn-glycero-3-phosphocholine. The catalysed reaction is 1-hexadecanoyl-2-(5Z,8Z,11Z-eicosatrienoyl)-sn-glycero-3-phosphocholine + cholesterol = cholesteryl (5Z,8Z,11Z)-eicosatrienoate + 1-hexadecanoyl-sn-glycero-3-phosphocholine. It carries out the reaction 1-hexadecanoyl-2-(5Z,8Z,11Z,14Z,17Z-eicosapentaenoyl)-sn-glycero-3-phosphocholine + cholesterol = (5Z,8Z,11Z,14Z,17Z-eicosapentaenoyl)-cholesterol + 1-hexadecanoyl-sn-glycero-3-phosphocholine. It catalyses the reaction 1-hexadecanoyl-2-(9Z,12Z-octadecadienoyl)-sn-glycero-3-phosphocholine + cholesterol = cholesteryl (9Z,12Z)-octadecadienoate + 1-hexadecanoyl-sn-glycero-3-phosphocholine. The enzyme catalyses 1-hexadecanoyl-2-(6Z,9Z,12Z-octadecatrienoyl)-sn-glycero-3-phosphocholine + cholesterol = (6Z,9Z,12Z-octadecatrienoyl)-cholesterol + 1-hexadecanoyl-sn-glycero-3-phosphocholine. The catalysed reaction is 1-hexadecanoyl-2-(11Z,14Z,17Z-eicosatrienoyl)-sn-glycero-3-phosphocholine + cholesterol = (11Z,14Z,17Z-eicosatrienoyl)-cholesterol + 1-hexadecanoyl-sn-glycero-3-phosphocholine. It carries out the reaction 1-hexadecanoyl-2-(9Z,12Z,15Z-octadecatrienoyl)-sn-glycero-3-phosphocholine + cholesterol = (9Z,12Z,15Z-octadecatrienoyl)-cholesterol + 1-hexadecanoyl-sn-glycero-3-phosphocholine. It catalyses the reaction 1-hexadecanoyl-2-(9Z,12Z-octadecadienoyl)-sn-glycero-3-phosphocholine + H2O = (9Z,12Z)-octadecadienoate + 1-hexadecanoyl-sn-glycero-3-phosphocholine + H(+). The enzyme catalyses 1-hexadecanoyl-2-(5Z,8Z,11Z,14Z-eicosatetraenoyl)-sn-glycero-3-phosphocholine + H2O = 1-hexadecanoyl-sn-glycero-3-phosphocholine + (5Z,8Z,11Z,14Z)-eicosatetraenoate + H(+). The catalysed reaction is a 1-O-alkyl-2-acetyl-sn-glycero-3-phosphocholine + 1-hexadecanoyl-sn-glycero-3-phosphocholine = 1-hexadecanoyl-2-acetyl-sn-glycero-3-phosphocholine + a 1-O-alkyl-sn-glycero-3-phosphocholine. In terms of biological role, central enzyme in the extracellular metabolism of plasma lipoproteins. Synthesized mainly in the liver and secreted into plasma where it converts cholesterol and phosphatidylcholines (lecithins) to cholesteryl esters and lysophosphatidylcholines on the surface of high and low density lipoproteins (HDLs and LDLs). The cholesterol ester is then transported back to the liver. Also produced in the brain by primary astrocytes, and esterifies free cholesterol on nascent APOE-containing lipoproteins secreted from glia and influences cerebral spinal fluid (CSF) APOE- and APOA1 levels. Together with APOE and the cholesterol transporter ABCA1, plays a key role in the maturation of glial-derived, nascent lipoproteins. Required for remodeling high-density lipoprotein particles into their spherical forms. Has a preference for plasma 16:0-18:2 or 18:O-18:2 phosphatidylcholines. Catalyzes the hydrolysis of 1-O-alkyl-2-acetyl-sn-glycero-3-phosphocholine (platelet-activating factor or PAF) to 1-O-alkyl-sn-glycero-3-phosphocholine (lyso-PAF). Also catalyzes the transfer of the acetate group from PAF to 1-hexadecanoyl-sn-glycero-3-phosphocholine forming lyso-PAF. Catalyzes the esterification of (24S)-hydroxycholesterol (24(S)OH-C), also known as cerebrosterol to produce 24(S)OH-C monoesters. The sequence is that of Phosphatidylcholine-sterol acyltransferase (LCAT) from Oryctolagus cuniculus (Rabbit).